Reading from the N-terminus, the 342-residue chain is Glycerol-3-phosphate dehydrogenase [NAD(P)+] (342 aa).

3 residues coordinate NADPH: W11, R33, and K112. The sn-glycerol 3-phosphate site is built by K112, G147, and S149. A151 serves as a coordination point for NADPH. K202, D255, S265, R266, and N267 together coordinate sn-glycerol 3-phosphate. Catalysis depends on K202, which acts as the Proton acceptor. An NADPH-binding site is contributed by R266. Positions 290 and 292 each coordinate NADPH.

The protein belongs to the NAD-dependent glycerol-3-phosphate dehydrogenase family.

The protein resides in the cytoplasm. The enzyme catalyses sn-glycerol 3-phosphate + NAD(+) = dihydroxyacetone phosphate + NADH + H(+). It catalyses the reaction sn-glycerol 3-phosphate + NADP(+) = dihydroxyacetone phosphate + NADPH + H(+). Its pathway is membrane lipid metabolism; glycerophospholipid metabolism. Functionally, catalyzes the reduction of the glycolytic intermediate dihydroxyacetone phosphate (DHAP) to sn-glycerol 3-phosphate (G3P), the key precursor for phospholipid synthesis. This Cupriavidus metallidurans (strain ATCC 43123 / DSM 2839 / NBRC 102507 / CH34) (Ralstonia metallidurans) protein is Glycerol-3-phosphate dehydrogenase [NAD(P)+].